A 240-amino-acid chain; its full sequence is 1-(5-phosphoribosyl)-5-[(5-phosphoribosylamino)methylideneamino] imidazole-4-carboxamide isomerase (240 aa).

Asp8 serves as the catalytic Proton acceptor. Catalysis depends on Asp129, which acts as the Proton donor.

The protein belongs to the HisA/HisF family.

It localises to the cytoplasm. The enzyme catalyses 1-(5-phospho-beta-D-ribosyl)-5-[(5-phospho-beta-D-ribosylamino)methylideneamino]imidazole-4-carboxamide = 5-[(5-phospho-1-deoxy-D-ribulos-1-ylimino)methylamino]-1-(5-phospho-beta-D-ribosyl)imidazole-4-carboxamide. It participates in amino-acid biosynthesis; L-histidine biosynthesis; L-histidine from 5-phospho-alpha-D-ribose 1-diphosphate: step 4/9. This chain is 1-(5-phosphoribosyl)-5-[(5-phosphoribosylamino)methylideneamino] imidazole-4-carboxamide isomerase, found in Caldanaerobacter subterraneus subsp. tengcongensis (strain DSM 15242 / JCM 11007 / NBRC 100824 / MB4) (Thermoanaerobacter tengcongensis).